The primary structure comprises 422 residues: Alcohol dehydrogenase 4 (422 aa).

A mitochondrion-targeting transit peptide spans Met1 to Ser29. Asp82, Asn114, Gly141, Ser142, Thr181, Thr182, Thr190, Phe192, Lys203, and Gly225 together coordinate NAD(+). Fe(2+) contacts are provided by Asp237, His241, and His306. NAD(+)-binding residues include His310 and His320. His320 is a Fe(2+) binding site.

It belongs to the iron-containing alcohol dehydrogenase family. Requires Zn(2+) as cofactor.

It is found in the mitochondrion matrix. The enzyme catalyses a primary alcohol + NAD(+) = an aldehyde + NADH + H(+). It catalyses the reaction a secondary alcohol + NAD(+) = a ketone + NADH + H(+). The catalysed reaction is ethanol + NAD(+) = acetaldehyde + NADH + H(+). Involved in ethanol oxidation in mitochondria. The sequence is that of Alcohol dehydrogenase 4 (adh4) from Schizosaccharomyces pombe (strain 972 / ATCC 24843) (Fission yeast).